A 132-amino-acid chain; its full sequence is uncharacterized protein (132 aa).

This is an uncharacterized protein from Sinorhizobium fredii (strain NBRC 101917 / NGR234).